We begin with the raw amino-acid sequence, 1050 residues long: DNA-directed RNA polymerase subunit beta (1050 aa).

It belongs to the RNA polymerase beta chain family. As to quaternary structure, in plastids the minimal PEP RNA polymerase catalytic core is composed of four subunits: alpha, beta, beta', and beta''. When a (nuclear-encoded) sigma factor is associated with the core the holoenzyme is formed, which can initiate transcription (Potential).

The protein resides in the plastid. It is found in the apicoplast. The catalysed reaction is RNA(n) + a ribonucleoside 5'-triphosphate = RNA(n+1) + diphosphate. Its function is as follows. DNA-dependent RNA polymerase catalyzes the transcription of DNA into RNA using the four ribonucleoside triphosphates as substrates. The chain is DNA-directed RNA polymerase subunit beta (rpoB) from Neospora caninum (Coccidian parasite).